The following is a 133-amino-acid chain: Holo-[acyl-carrier-protein] synthase (133 aa).

Aspartate 8 and glutamate 57 together coordinate Mg(2+).

The protein belongs to the P-Pant transferase superfamily. AcpS family. It depends on Mg(2+) as a cofactor.

It localises to the cytoplasm. It catalyses the reaction apo-[ACP] + CoA = holo-[ACP] + adenosine 3',5'-bisphosphate + H(+). Transfers the 4'-phosphopantetheine moiety from coenzyme A to a Ser of acyl-carrier-protein. The chain is Holo-[acyl-carrier-protein] synthase from Parvibaculum lavamentivorans (strain DS-1 / DSM 13023 / NCIMB 13966).